Here is a 753-residue protein sequence, read N- to C-terminus: CCR4-NOT transcription complex subunit 3 (753 aa).

The interval 240–534 (ATSPPSHSHM…PPQFSTAPEI (295 aa)) is disordered. Residues 257–268 (SSSTPTSTTSSS) show a composition bias toward low complexity. Residues 284–293 (DDKKRGRSTD) show a composition bias toward basic and acidic residues. T292 is modified (phosphothreonine). The segment covering 294 to 315 (SEVSQSPAKNGSKPVHSNQHPQ) has biased composition (polar residues). S299 carries the post-translational modification Phosphoserine. The segment covering 317 to 330 (PAVPPTYPSGPPPA) has biased composition (pro residues). The span at 350 to 376 (PSALGPKASPAPSHNSGTPAPYAQAVA) shows a compositional bias: low complexity. Residues 396–408 (SGGGGGGSGGGGS) are compositionally biased toward gly residues. Residues 424–433 (NGATSYSSVV) are compositionally biased toward polar residues. Residues 441–457 (ALSSSGGNNASSQALGP) show a composition bias toward low complexity. Residues 458 to 467 (PSGPHNPPPS) show a composition bias toward pro residues. Residues 479 to 491 (GAGGVAPGSGNNS) show a composition bias toward gly residues. S542 carries the phosphoserine modification. The tract at residues 661–753 (EFYQRLSTET…YRYLEDRDLQ (93 aa)) is repressor domain.

This sequence belongs to the CNOT2/3/5 family. In terms of assembly, component of the CCR4-NOT complex; distinct complexes seem to exist that differ in the participation of probably mutually exclusive catalytic subunits. In the complex interacts directly with CNOT2. Interacts with TIP120B and NANOS2. Interacts with EBF1. Interacts in an RNA-independent manner with BICC1 (via KH domains). As to expression, ubiquitous. Highly expressed in brain, heart, thymus, spleen, kidney, liver, small intestine, lung and peripheral blood leukocytes.

The protein resides in the cytoplasm. The protein localises to the nucleus. Its subcellular location is the P-body. Component of the CCR4-NOT complex which is one of the major cellular mRNA deadenylases and is linked to various cellular processes including bulk mRNA degradation, miRNA-mediated repression, translational repression during translational initiation and general transcription regulation. Additional complex functions may be a consequence of its influence on mRNA expression. May be involved in metabolic regulation; may be involved in recruitment of the CCR4-NOT complex to deadenylation target mRNAs involved in energy metabolism. Involved in mitotic progression and regulation of the spindle assembly checkpoint by regulating the stability of MAD1L1 mRNA. Can repress transcription and may link the CCR4-NOT complex to transcriptional regulation; the repressive function may involve histone deacetylases. Involved in the maintenance of embryonic stem (ES) cell identity. This Homo sapiens (Human) protein is CCR4-NOT transcription complex subunit 3.